A 143-amino-acid polypeptide reads, in one-letter code: S-protein homolog 11 (143 aa).

An N-terminal signal peptide occupies residues 1-20 (MNCFSFSFIIIVLCAGSSNA).

The protein belongs to the plant self-incompatibility (S1) protein family.

The protein resides in the secreted. In Arabidopsis thaliana (Mouse-ear cress), this protein is S-protein homolog 11.